The following is an 883-amino-acid chain: Lysine-specific demethylase JMJ29 (883 aa).

Disordered stretches follow at residues 30 to 62 (KPFM…SAVK) and 161 to 204 (RTHS…SRKQ). Over residues 34–43 (SKGSSPSSSS) the composition is skewed to low complexity. Composition is skewed to polar residues over residues 161–172 (RTHSLSANSPEN) and 184–204 (SPAS…SRKQ). 12 residues coordinate Zn(2+): C209, C212, C223, C226, C232, C235, C252, C255, C338, C341, C363, and H381. The RING-type; degenerate zinc finger occupies 209–256 (CHQCLKGERITLLICSECEKTMFCLQCIRKWYPNLSEDDVVEKCPLCR). The segment at 333–392 (DERVYCDHCATSIVDLHRSCPKCSYELCLKCCQEIREGSLSERPEMKFHYVDRGHRYMHG) adopts a B box-type; atypical zinc-finger fold. The JmjC domain maps to 632-863 (PRTGILNIAT…ECLRLTEEFR (232 aa)). Fe cation is bound by residues H676 and D678. The tract at residues 713–743 (NKVDKQSTEDCNEKEEEEEEELNMPEISSNE) is disordered. A compositionally biased stretch (acidic residues) spans 722–735 (DCNEKEEEEEEELN). The Nuclear localization signal motif lies at 755-762 (FRREDVPK). H831 provides a ligand contact to Fe cation.

Belongs to the JARID1 histone demethylase family. It depends on Fe(2+) as a cofactor. Expressed in inflorescences, roots, siliques, leaves and stems.

It localises to the nucleus. In terms of biological role, may function as histone H3 lysine demethylase and be involved in regulation of gene expression. This Arabidopsis thaliana (Mouse-ear cress) protein is Lysine-specific demethylase JMJ29.